The sequence spans 144 residues: MRIGGLDVGEKTIGVALSDELGLTAQALEVIRRRSLEQDLARLDEIARHYGVVRWVVGMPRNMNGTYGPRAELTRAFMERLAGHSGLPVEAWDERLSTMAAERVLLEADVSRARRRKVIDKMAAAVILQGYLDARAARPPESFV.

It belongs to the YqgF nuclease family.

It is found in the cytoplasm. Its function is as follows. Could be a nuclease involved in processing of the 5'-end of pre-16S rRNA. The chain is Putative pre-16S rRNA nuclease from Symbiobacterium thermophilum (strain DSM 24528 / JCM 14929 / IAM 14863 / T).